We begin with the raw amino-acid sequence, 496 residues long: MASQRNDRIQASRNGLKGKVLTLDTMNPCVRRVEYAVRGPIVQRALELEQELRQGVKKPFTEVIRANIGDAQAMGQRPITFFRQVLALCVYPNLLSSPDFPEDAKRRAERILQACGGHSLGAYSISSGIQPIREDVAQYIERRDGGIPADPNNIFLSTGASDAIVTMLKLLVAGEGRARTGVLIPIPQYPLYSAALAELDAVQVDYYLDEERAWALDIAELRRALCQARDRCCPRVLCVINPGNPTGQVQTRECIEAVIRFAFEEGLFLMADEVYQDNVYAEGSQFHSFKKVLTEMGPPYATQQELASFHSVSKGYMGECGFRGGYVEVVNMDAEVQKQMAKLMSVRLCPPVPGQALMGMVVSPPTPSEPSFKQFQAERQEVLAELAAKAKLTEQVFNEAPGIRCNPVQGAMYSFPQIQLPLKAVQRAQDLGLAPDMFFCLCLLEETGICVVPGSGFGQQEGTYHFRMTILPPMEKLRVLLEKLRHFHAKFTHEYS.

Alanine 2 carries the N-acetylalanine modification. Threonine 22 carries the post-translational modification Phosphothreonine. Residue lysine 314 is modified to N6-(pyridoxal phosphate)lysine.

Belongs to the class-I pyridoxal-phosphate-dependent aminotransferase family. Alanine aminotransferase subfamily. As to quaternary structure, homodimer. It depends on pyridoxal 5'-phosphate as a cofactor. In terms of tissue distribution, mainly expressed in liver, intestine, colon and white adipose tissue.

It localises to the cytoplasm. The catalysed reaction is L-alanine + 2-oxoglutarate = pyruvate + L-glutamate. It functions in the pathway amino-acid degradation; L-alanine degradation via transaminase pathway; pyruvate from L-alanine: step 1/1. Its function is as follows. Catalyzes the reversible transamination between alanine and 2-oxoglutarate to form pyruvate and glutamate. Participates in cellular nitrogen metabolism and also in liver gluconeogenesis starting with precursors transported from skeletal muscles. The protein is Alanine aminotransferase 1 (Gpt) of Mus musculus (Mouse).